We begin with the raw amino-acid sequence, 397 residues long: Tryptophan synthase beta chain (397 aa).

An N6-(pyridoxal phosphate)lysine modification is found at K88.

This sequence belongs to the TrpB family. Tetramer of two alpha and two beta chains. Pyridoxal 5'-phosphate is required as a cofactor.

The enzyme catalyses (1S,2R)-1-C-(indol-3-yl)glycerol 3-phosphate + L-serine = D-glyceraldehyde 3-phosphate + L-tryptophan + H2O. It participates in amino-acid biosynthesis; L-tryptophan biosynthesis; L-tryptophan from chorismate: step 5/5. Its function is as follows. The beta subunit is responsible for the synthesis of L-tryptophan from indole and L-serine. The chain is Tryptophan synthase beta chain (trpB) from Haemophilus influenzae (strain ATCC 51907 / DSM 11121 / KW20 / Rd).